We begin with the raw amino-acid sequence, 140 residues long: Vacuolar protein sorting-associated protein 55 homolog (140 aa).

Over 1–16 the chain is Cytoplasmic; it reads MADVPGYLRTCLDMGK. Residues 17-37 form a helical membrane-spanning segment; the sequence is IAFLAILVSTGIVLQILACAL. Residues 38 to 40 lie on the Lumenal side of the membrane; the sequence is FNN. The chain crosses the membrane as a helical span at residues 41-61; it reads WWPMLSVIMYVLLPMPLLFFG. Residues 62–75 are Cytoplasmic-facing; it reads GSDSTSLFNESDNS. A helical transmembrane segment spans residues 76–98; the sequence is WINAAKFLTGASAVGSVAIPSIL. The Lumenal portion of the chain corresponds to 99 to 108; the sequence is KHAGLIGWGA. Residues 109-129 form a helical membrane-spanning segment; sequence LALDLSSYVVFLVAILGYICI. The Cytoplasmic portion of the chain corresponds to 130–140; the sequence is GDASDNYYSYI.

Belongs to the OB-RGRP/VPS55 family.

The protein localises to the endosome membrane. In terms of biological role, involved in endosomal protein transport. This is Vacuolar protein sorting-associated protein 55 homolog from Arabidopsis thaliana (Mouse-ear cress).